Here is a 379-residue protein sequence, read N- to C-terminus: Putative glutamate--cysteine ligase 2 (379 aa).

This sequence belongs to the glutamate--cysteine ligase type 2 family. YbdK subfamily.

The enzyme catalyses L-cysteine + L-glutamate + ATP = gamma-L-glutamyl-L-cysteine + ADP + phosphate + H(+). Its function is as follows. ATP-dependent carboxylate-amine ligase which exhibits weak glutamate--cysteine ligase activity. This chain is Putative glutamate--cysteine ligase 2, found in Mycobacterium avium (strain 104).